We begin with the raw amino-acid sequence, 320 residues long: Malate dehydrogenase (320 aa).

NAD(+)-binding positions include 10–15 (GSGMIG) and Asp-34. The substrate site is built by Arg-83 and Arg-89. Residues Asn-96 and 119-121 (ITN) each bind NAD(+). Substrate contacts are provided by Asn-121 and Arg-152. The active-site Proton acceptor is His-176.

The protein belongs to the LDH/MDH superfamily. MDH type 3 family.

It catalyses the reaction (S)-malate + NAD(+) = oxaloacetate + NADH + H(+). Catalyzes the reversible oxidation of malate to oxaloacetate. The chain is Malate dehydrogenase from Brucella melitensis biotype 1 (strain ATCC 23456 / CCUG 17765 / NCTC 10094 / 16M).